Here is an 840-residue protein sequence, read N- to C-terminus: Serotype-specific mannosyltransferase WbdA (840 aa).

The interval 2-399 (HILIDVQGYQ…WANTAHLAIE (398 aa)) is alpha-(1-&gt;2)-mannosyltransferase. The interval 456–829 (KLLVDISVLA…WKQSAEFLLK (374 aa)) is alpha-(1-&gt;3)-mannosyltransferase.

Belongs to the glycosyltransferase group 1 family. Glycosyltransferase 4 subfamily. In terms of assembly, monomer. Interacts with the C-terminal region of WbdD. Interacts with WbdD via a surface-exposed alpha-helix in the C-terminal mannosyltransferase domain. However, the C-terminal domain is unable to interact with WbdD in the absence of its N-terminal partner.

The protein resides in the cell inner membrane. It carries out the reaction [alpha-D-Man-(1-&gt;3)-alpha-D-Man-(1-&gt;3)-alpha-D-Man-(1-&gt;2)-alpha-D-Man-(1-&gt;2)](n)-alpha-D-Man-(1-&gt;3)-alpha-D-Man-(1-&gt;3)-alpha-D-Man-(1-&gt;3)-alpha-D-GlcNAc-di-trans,octa-cis-undecaprenyl diphosphate + 2 GDP-alpha-D-mannose = alpha-D-Man-(1-&gt;2)-alpha-D-Man-(1-&gt;2)-[alpha-D-Man-(1-&gt;3)-alpha-D-Man-(1-&gt;3)-alpha-D-Man-(1-&gt;2)-alpha-D-Man-(1-&gt;2)](n)-alpha-D-Man-(1-&gt;3)-alpha-D-Man-(1-&gt;3)-alpha-D-Man-(1-&gt;3)-alpha-D-GlcNAc-di-trans,octa-cis-undecaprenyl diphosphate + 2 GDP + 2 H(+). The catalysed reaction is alpha-D-Man-(1-&gt;2)-alpha-D-Man-(1-&gt;2)-[alpha-D-Man-(1-&gt;3)-alpha-D-Man-(1-&gt;3)-alpha-D-Man-(1-&gt;2)-alpha-D-Man-(1-&gt;2)](n)-alpha-D-Man-(1-&gt;3)-alpha-D-Man-(1-&gt;3)-alpha-D-Man-(1-&gt;3)-alpha-D-GlcNAc-di-trans,octa-cis-undecaprenyl diphosphate + 2 GDP-alpha-D-mannose = [alpha-D-Man-(1-&gt;3)-alpha-D-Man-(1-&gt;3)-alpha-D-Man-(1-&gt;2)-alpha-D-Man-(1-&gt;2)](n+1)-alpha-D-Man-(1-&gt;3)-alpha-D-Man-(1-&gt;3)-alpha-D-Man-(1-&gt;3)-alpha-D-GlcNAc-di-trans,octa-cis-undecaprenyl diphosphate + 2 GDP + 2 H(+). Its pathway is bacterial outer membrane biogenesis; LPS O-antigen biosynthesis. The alpha-(1-&gt;2)-mannosyltransferase activity of the N-terminal domain is regulated by the activity of the C-terminal alpha-(1-&gt;3)-mannosyltransferase. The relative concentration of WbdA and WbdD is critical in determining the O polysaccharide (OPS) modal chain length. OPS chain length increases with increasing concentration of WbdA, but the maximum length does not increase beyond the wild-type modal length, despite substantial increases in WbdA concentration. Mannosyltransferase involved in the biosynthesis of the repeat unit of the lipopolysaccharide (LPS) O-antigen region. Catalyzes the polymerization of a tetrasaccharide repeat unit containing two alpha-(1-&gt;3)- and two alpha-(1-&gt;2)-linked mannopyranose residues. Extension is terminated by the action of the chain terminator bifunctional methyltransferase/kinase WbdD. This is Serotype-specific mannosyltransferase WbdA from Escherichia coli.